Consider the following 181-residue polypeptide: Large ribosomal subunit protein uL5 (181 aa).

It belongs to the universal ribosomal protein uL5 family. In terms of assembly, part of the 50S ribosomal subunit; part of the 5S rRNA/L5/L18/L25 subcomplex. Contacts the 5S rRNA and the P site tRNA. Forms a bridge to the 30S subunit in the 70S ribosome.

In terms of biological role, this is one of the proteins that bind and probably mediate the attachment of the 5S RNA into the large ribosomal subunit, where it forms part of the central protuberance. In the 70S ribosome it contacts protein S13 of the 30S subunit (bridge B1b), connecting the 2 subunits; this bridge is implicated in subunit movement. Contacts the P site tRNA; the 5S rRNA and some of its associated proteins might help stabilize positioning of ribosome-bound tRNAs. The chain is Large ribosomal subunit protein uL5 from Colwellia psychrerythraea (strain 34H / ATCC BAA-681) (Vibrio psychroerythus).